Consider the following 234-residue polypeptide: ATP-dependent dethiobiotin synthetase BioD (234 aa).

12 to 17 (DVGKTF) lines the ATP pocket. Residue Thr16 coordinates Mg(2+). Lys37 is a catalytic residue. Thr41 is a binding site for substrate. ATP-binding positions include Asp54 and 115–118 (EGAG). 2 residues coordinate Mg(2+): Asp54 and Glu115.

The protein belongs to the dethiobiotin synthetase family. In terms of assembly, homodimer. It depends on Mg(2+) as a cofactor.

It is found in the cytoplasm. It carries out the reaction (7R,8S)-7,8-diammoniononanoate + CO2 + ATP = (4R,5S)-dethiobiotin + ADP + phosphate + 3 H(+). Its pathway is cofactor biosynthesis; biotin biosynthesis; biotin from 7,8-diaminononanoate: step 1/2. Functionally, catalyzes a mechanistically unusual reaction, the ATP-dependent insertion of CO2 between the N7 and N8 nitrogen atoms of 7,8-diaminopelargonic acid (DAPA, also called 7,8-diammoniononanoate) to form a ureido ring. The sequence is that of ATP-dependent dethiobiotin synthetase BioD from Lysinibacillus sphaericus (Bacillus sphaericus).